The sequence spans 388 residues: Leucine aminopeptidase 1 (388 aa).

A signal peptide spans 1-19; that stretch reads MKSLSLLALAAIAPPAAVA. Residues 20 to 88 constitute a propeptide that is removed on maturation; sequence AVVDRQVPFE…SAKSHERIQV (69 aa). N180 carries N-linked (GlcNAc...) asparagine glycosylation. Positions 188, 207, 246, and 273 each coordinate Zn(2+). A disulfide bridge links C322 with C326. H355 is a Zn(2+) binding site.

This sequence belongs to the peptidase M28 family. M28E subfamily. In terms of assembly, monomer. Zn(2+) is required as a cofactor.

It localises to the secreted. In terms of biological role, extracellular aminopeptidase that allows assimilation of proteinaceous substrates. The protein is Leucine aminopeptidase 1 (LAP1) of Coccidioides posadasii (strain C735) (Valley fever fungus).